The chain runs to 181 residues: MASSIVSSAAAATRSNVAQASMVAPFTGLKSAASFPVTKKNNNVDITSLASNGGRVRCMQVWPPINMKKYETLSYLPDLSDEQLLSEIEYLLKNGWVPCLEFETERGFVYRENNSSPGYYDGRYWTMWKLPMFGCTDATQVLAEVQEAKKAYPQAWVRIIGFDNVRQVQCISFIAYKPEGF.

A chloroplast-targeting transit peptide spans 1-57 (MASSIVSSAAAATRSNVAQASMVAPFTGLKSAASFPVTKKNNNVDITSLASNGGRVR).

This sequence belongs to the RuBisCO small chain family. In terms of assembly, (Microbial infection) Binds to tobamovirus movement protein; this interaction seems required for viral systemic movement. As to quaternary structure, heterohexadecamer of 8 large and 8 small subunits.

It is found in the plastid. Its subcellular location is the chloroplast. The protein localises to the cell junction. The protein resides in the plasmodesma. Its function is as follows. RuBisCO catalyzes two reactions: the carboxylation of D-ribulose 1,5-bisphosphate, the primary event in carbon dioxide fixation, as well as the oxidative fragmentation of the pentose substrate. Both reactions occur simultaneously and in competition at the same active site. Although the small subunit is not catalytic it is essential for maximal activity. Involved in antiviral defenses. This chain is Ribulose bisphosphate carboxylase small subunit, chloroplastic 1, found in Solanum lycopersicum (Tomato).